Reading from the N-terminus, the 131-residue chain is MIQLKTMLNCIDNSGAALVECAMVVGQKRHASIGDRIVVVVQKQRGADSAGMAASSAATKVKRGDIRHAVVVRTKQKVQRRDGSVVRFDDNACVLINKAGDPIGSRINGVVGQELRKKKWSKILSMAPMQA.

Belongs to the universal ribosomal protein uL14 family. As to quaternary structure, component of the mitochondrial large ribosomal subunit (mt-LSU). Mature N.crassa 74S mitochondrial ribosomes consist of a small (37S) and a large (54S) subunit. The 37S small subunit contains a 16S ribosomal RNA (16S mt-rRNA) and 32 different proteins. The 54S large subunit contains a 23S rRNA (23S mt-rRNA) and 42 different proteins.

It is found in the mitochondrion. Component of the mitochondrial ribosome (mitoribosome), a dedicated translation machinery responsible for the synthesis of mitochondrial genome-encoded proteins, including at least some of the essential transmembrane subunits of the mitochondrial respiratory chain. The mitoribosomes are attached to the mitochondrial inner membrane and translation products are cotranslationally integrated into the membrane. The polypeptide is Large ribosomal subunit protein uL14m (mrpl38) (Neurospora crassa (strain ATCC 24698 / 74-OR23-1A / CBS 708.71 / DSM 1257 / FGSC 987)).